The chain runs to 421 residues: ATP-dependent RNA helicase RhlB (421 aa).

The Q motif motif lies at 9 to 37; it reads QKFSDFALHPKVVEALEKKGFHNCTPIQA. One can recognise a Helicase ATP-binding domain in the interval 40–219; it reads LPLTLAGRDV…FEQMNNAEYI (180 aa). 53 to 60 serves as a coordination point for ATP; that stretch reads AQTGTGKT. Residues 165 to 168 carry the DEAD box motif; the sequence is DEAD. Residues 245-390 form the Helicase C-terminal domain; sequence RLLQTLIEEE…VSKYNPDALM (146 aa). The disordered stretch occupies residues 392–421; that stretch reads DLPKPLRLTRPRTGNGPRRTGTPRNRRRSG. The segment covering 402–414 has biased composition (low complexity); that stretch reads PRTGNGPRRTGTP.

Belongs to the DEAD box helicase family. RhlB subfamily. As to quaternary structure, component of the RNA degradosome, which is a multiprotein complex involved in RNA processing and mRNA degradation.

The protein resides in the cytoplasm. It catalyses the reaction ATP + H2O = ADP + phosphate + H(+). In terms of biological role, DEAD-box RNA helicase involved in RNA degradation. Has RNA-dependent ATPase activity and unwinds double-stranded RNA. The protein is ATP-dependent RNA helicase RhlB of Escherichia coli O17:K52:H18 (strain UMN026 / ExPEC).